The following is a 410-amino-acid chain: Putative competence-damage inducible protein (410 aa).

This sequence belongs to the CinA family.

The sequence is that of Putative competence-damage inducible protein from Clostridium kluyveri (strain NBRC 12016).